The sequence spans 168 residues: MEITEDSKRKINYQIRLATLSDIDQIIRINRSALPENYPYYFFVEHLKEYGQAFYVADLEGEVVGYVMPRIEWGFSNLKHIPSLVRKGHIVSIAVLEPFRKIGVGTSLLQNSLKAMKDTYNAEEVYLEVRVTNYPAISLYKKFNFREVKLLKHYYADGEDAYLMAAPL.

In terms of domain architecture, N-acetyltransferase spans 13–168 (YQIRLATLSD…EDAYLMAAPL (156 aa)). Residue Tyr-38 coordinates substrate. His-89 is a binding site for Zn(2+). Acetyl-CoA contacts are provided by residues 93 to 95 (IAV) and 101 to 106 (KIGVGT). CoA contacts are provided by residues 93–95 (IAV) and 101–106 (KIGVGT). Residue Glu-128 participates in Zn(2+) binding. Residues Asn-133 and 140-142 (YKK) each bind acetyl-CoA. Asn-133 serves as a coordination point for CoA. Residue Tyr-155 coordinates substrate.

It belongs to the acetyltransferase family. ARD1 subfamily. In terms of assembly, homodimer.

Its subcellular location is the cytoplasm. The catalysed reaction is N-terminal L-alanyl-[protein] + acetyl-CoA = N-terminal N(alpha)-acetyl-L-alanyl-[protein] + CoA + H(+). It catalyses the reaction N-terminal L-seryl-[protein] + acetyl-CoA = N-terminal N(alpha)-acetyl-L-seryl-[protein] + CoA + H(+). It carries out the reaction N-terminal L-methionyl-L-leucyl-[protein] + acetyl-CoA = N-terminal N(alpha)-acetyl-L-methionyl-L-leucyl-[protein] + CoA + H(+). The enzyme catalyses N-terminal L-methionyl-L-glutamyl-[protein] + acetyl-CoA = N-terminal N(alpha)-acetyl-L-methionyl-L-glutamyl-[protein] + CoA + H(+). Its function is as follows. Displays alpha (N-terminal) acetyltransferase activity. Catalyzes the covalent attachment of an acetyl moiety from acetyl-CoA to the free alpha-amino group at the N-terminus of a protein. This chain is N-alpha-acetyltransferase, found in Sulfolobus acidocaldarius (strain ATCC 33909 / DSM 639 / JCM 8929 / NBRC 15157 / NCIMB 11770).